We begin with the raw amino-acid sequence, 591 residues long: Aspartate--tRNA(Asp/Asn) ligase (591 aa).

Glutamate 176 is a binding site for L-aspartate. The segment at 200 to 203 is aspartate; sequence QLFK. Arginine 222 is a binding site for L-aspartate. ATP is bound by residues 222–224 and glutamine 231; that span reads RDE. L-aspartate is bound at residue histidine 450. Glutamate 484 is a binding site for ATP. L-aspartate is bound at residue arginine 491. 536 to 539 is an ATP binding site; that stretch reads GLDR.

The protein belongs to the class-II aminoacyl-tRNA synthetase family. Type 1 subfamily. In terms of assembly, homodimer.

The protein localises to the cytoplasm. The catalysed reaction is tRNA(Asx) + L-aspartate + ATP = L-aspartyl-tRNA(Asx) + AMP + diphosphate. Aspartyl-tRNA synthetase with relaxed tRNA specificity since it is able to aspartylate not only its cognate tRNA(Asp) but also tRNA(Asn). Reaction proceeds in two steps: L-aspartate is first activated by ATP to form Asp-AMP and then transferred to the acceptor end of tRNA(Asp/Asn). This Bacillus cereus (strain G9842) protein is Aspartate--tRNA(Asp/Asn) ligase.